Reading from the N-terminus, the 354-residue chain is DNA polymerase IV (354 aa).

The UmuC domain maps to 6 to 187; that stretch reads IIHVDCDCFY…LPVARLHGVG (182 aa). Mg(2+) is bound by residues Asp10 and Asp105. The active site involves Glu106.

This sequence belongs to the DNA polymerase type-Y family. In terms of assembly, monomer. It depends on Mg(2+) as a cofactor.

The protein resides in the cytoplasm. The catalysed reaction is DNA(n) + a 2'-deoxyribonucleoside 5'-triphosphate = DNA(n+1) + diphosphate. Functionally, poorly processive, error-prone DNA polymerase involved in untargeted mutagenesis. Copies undamaged DNA at stalled replication forks, which arise in vivo from mismatched or misaligned primer ends. These misaligned primers can be extended by PolIV. Exhibits no 3'-5' exonuclease (proofreading) activity. May be involved in translesional synthesis, in conjunction with the beta clamp from PolIII. In Pseudomonas putida (strain ATCC 47054 / DSM 6125 / CFBP 8728 / NCIMB 11950 / KT2440), this protein is DNA polymerase IV.